A 787-amino-acid chain; its full sequence is Pyridoxal-dependent decarboxylase domain-containing protein 1 (787 aa).

Basic and acidic residues predominate over residues 26–44; the sequence is MLEKSPRRTEEENGKKPVS. Residues 26–52 are disordered; sequence MLEKSPRRTEEENGKKPVSEDIPGPLQ. Phosphoserine is present on Ser-652. The disordered stretch occupies residues 682 to 787; the sequence is QGTGVTPPPT…SQVEELERLR (106 aa). A phosphothreonine mark is found at Thr-687 and Thr-691. Phosphoserine occurs at positions 710, 718, 722, and 748. Positions 725-748 are enriched in basic and acidic residues; that stretch reads HIEDLEKVEQLSSGLEHDNLEAHS. The segment covering 759-771 has biased composition (polar residues); that stretch reads TARQTEALQNQAQ. Over residues 772-787 the composition is skewed to basic and acidic residues; that stretch reads HQEDDHSQVEELERLR. Residue Ser-778 is modified to Phosphoserine.

Belongs to the group II decarboxylase family. It depends on pyridoxal 5'-phosphate as a cofactor.

The protein is Pyridoxal-dependent decarboxylase domain-containing protein 1 (Pdxdc1) of Mus musculus (Mouse).